We begin with the raw amino-acid sequence, 89 residues long: Small ribosomal subunit protein uS15 (89 aa).

The protein belongs to the universal ribosomal protein uS15 family. In terms of assembly, part of the 30S ribosomal subunit. Forms a bridge to the 50S subunit in the 70S ribosome, contacting the 23S rRNA.

One of the primary rRNA binding proteins, it binds directly to 16S rRNA where it helps nucleate assembly of the platform of the 30S subunit by binding and bridging several RNA helices of the 16S rRNA. Functionally, forms an intersubunit bridge (bridge B4) with the 23S rRNA of the 50S subunit in the ribosome. The polypeptide is Small ribosomal subunit protein uS15 (Phocaeicola vulgatus (strain ATCC 8482 / DSM 1447 / JCM 5826 / CCUG 4940 / NBRC 14291 / NCTC 11154) (Bacteroides vulgatus)).